Here is a 389-residue protein sequence, read N- to C-terminus: Oxytocin receptor (389 aa).

Residues 1–38 (MEGALAANWSAEAANASAAPPGAEGNRTAGPPRRNEAL) lie on the Extracellular side of the membrane. Positions 7–26 (ANWSAEAANASAAPPGAEGN) are enriched in low complexity. Residues 7–31 (ANWSAEAANASAAPPGAEGNRTAGP) are disordered. 3 N-linked (GlcNAc...) asparagine glycosylation sites follow: Asn8, Asn15, and Asn26. A helical transmembrane segment spans residues 39-63 (ARVEVAVLCLILLLALSGNACVLLA). Residues 64-74 (LRTTRQKHSRL) lie on the Cytoplasmic side of the membrane. Residues 75–97 (FFFMKHLSIADLVVAVFQVLPQL) form a helical membrane-spanning segment. The Extracellular portion of the chain corresponds to 98-113 (LWDITFRFYGPDLLCR). Residues Cys112 and Cys187 are joined by a disulfide bond. Residues 114–135 (LVKYLQVVGMFASTYLLLLMSL) form a helical membrane-spanning segment. Residues 136 to 154 (DRCLAICQPLRSLRRRTDR) are Cytoplasmic-facing. The helical transmembrane segment at 155-175 (LAVLATWLGCLVASAPQVHIF) threads the bilayer. At 176 to 202 (SLREVADGVFDCWAVFIQPWGPKAYIT) the chain is on the extracellular side. A helical membrane pass occupies residues 203–225 (WITLAVYIVPVIVLAACYGLISF). Over 226–275 (KIWQNLRLKTAAAAAAEAPEGAAAGDGGRVALARVSSVKLISKAKIRTVK) the chain is Cytoplasmic. The helical transmembrane segment at 276–294 (MTFIIVLAFIVCWTPFFFV) threads the bilayer. The Extracellular segment spans residues 295-309 (QMWSVWDANAPKEAS). The chain crosses the membrane as a helical span at residues 310–332 (AFIIVMLLASLNSCCNPWIYMLF). At 333–389 (TGHLFHELVQRFLCCSASYLKGRRLGETSASKKSNSSSFVLSHRSSSQRSCSQPSTA) the chain is on the cytoplasmic side. Residues 361–389 (SASKKSNSSSFVLSHRSSSQRSCSQPSTA) are disordered. Ser366 and Ser368 each carry phosphoserine.

Belongs to the G-protein coupled receptor 1 family. Vasopressin/oxytocin receptor subfamily.

The protein localises to the cell membrane. Receptor for oxytocin. The activity of this receptor is mediated by G proteins which activate a phosphatidylinositol-calcium second messenger system. The protein is Oxytocin receptor (OXTR) of Homo sapiens (Human).